Here is a 487-residue protein sequence, read N- to C-terminus: Probable UDP-N-acetylglucosamine pyrophosphorylase (487 aa).

Residues 105-108 (LAGG) carry the Substrate binding motif. Residues 105-108 (LAGG), lysine 119, glutamine 198, and glycine 225 each bind UTP. Residue asparagine 226 participates in substrate binding. UTP is bound at residue aspartate 256. Positions 307-308 (EY) match the Substrate binding motif. Lysine 382 provides a ligand contact to UTP. Lysine 412 contributes to the substrate binding site.

This sequence belongs to the UDPGP type 1 family.

Its subcellular location is the cytoplasm. The catalysed reaction is N-acetyl-alpha-D-glucosamine 1-phosphate + UTP + H(+) = UDP-N-acetyl-alpha-D-glucosamine + diphosphate. The protein operates within nucleotide-sugar biosynthesis; UDP-N-acetyl-alpha-D-glucosamine biosynthesis; UDP-N-acetyl-alpha-D-glucosamine from N-acetyl-alpha-D-glucosamine 1-phosphate: step 1/1. This Dictyostelium discoideum (Social amoeba) protein is Probable UDP-N-acetylglucosamine pyrophosphorylase (uap1).